Here is a 133-residue protein sequence, read N- to C-terminus: UPF0102 protein Plav_3586 (133 aa).

Belongs to the UPF0102 family.

In Parvibaculum lavamentivorans (strain DS-1 / DSM 13023 / NCIMB 13966), this protein is UPF0102 protein Plav_3586.